The sequence spans 284 residues: MRRLPAVAGSFYESDPKKLKMQIEWSFRHNIGPRDIPKQSYEKKKRDNLFFIVPHAGYIYSGPVAAHSYYYLASEGKPDVVIILGPNHTGLGSYVSAWPKGEWETPLGSVKVDEEVLMQLVMESEVIDLEEKSHLYEHSIEVQLPFLQYFFDDNFKIVPIVIMMQTPEIAEFLADAIYKVIQKYSDKDIVVLASSDMNHYDPHEITMKKDEEAIEKIQQLDYRGLYEVVEGKDVTLCGYGPIMVSLILAKKLGKKAYILKHATSGDTSGPKDSVVGYLAARFGS.

Belongs to the MEMO1 family.

The chain is MEMO1 family protein SSO0066 from Saccharolobus solfataricus (strain ATCC 35092 / DSM 1617 / JCM 11322 / P2) (Sulfolobus solfataricus).